An 846-amino-acid polypeptide reads, in one-letter code: MAVKRLIETFVPENYKIFLDIDRKTKKIKGQVAITGEAKDTVVAFHAKGLHFNKVRAFSVDTNFIENEEDEEIVVKIGETGRVTVSFEYEAELTDNMMGIYPSYYEVNGEKKMLIGTQFESHFARQAFPSIDEPEAKATFDLSVKFDEEEGDIIVSNMPELLNINGIHVFERTVKMSSYLLAFVFGELQYKKGKTKSGVEVGAFATKAHSQAALDFPLDIAIRSIEFYEDYYQTPYPLPHSWHIALPDFSSGAMENWGCITYREVCMLVDPENATIQSKQYVATVIAHELAHQWFGDLVTMQWWDDLWLNESFANNMEYVCMDALEPSWNVWESFSISEANMALNRDATDGVQSVHVEVTHPDEIGTLFDPAIVYAKGSRLMVMLRKWLGDEDFAAGLALYFKRHQYGNTVGDNLWDALAEVSGKDVAAFMHSWVNQPGYPVVTAEVVDDTLILSQKQFFVGEGVDKGRLWNVPLNTNWTGLPDLLSSEKVEIPGFAALKTKNNGKALFLNDANMAHYIIDYKGALLTDLLSEVESLENVTKFQILQDRKLLAKAGVISYADVVNILPSFTNEESYLVNTGLSQLISELELFVDEDSETEKAFQSLVGKLFAKNYARLGWDKVAGESAGDESLRGIVLSKTLYSENADAKTKASQIFATHKENLASIPADIRPIVLNNEIKTTNSAELVKTYRETYIKTSLQEFKRELEGAVALIKDEKVIAELLESFKNADIVKPQDIAFSWFYLLRNDFSQDAAWAWEKANWASLEEKLGGDMSYDKFVIYPGNTFKTADKLAEYKAFFEPKLENQGLKRSIEMAIKQITARVALIDSQKAAVDKAITDIAEKL.

Residues Glu120 and Gly252–Asn256 contribute to the substrate site. His288 serves as a coordination point for Zn(2+). The active-site Proton acceptor is the Glu289. Residues His292 and Glu311 each contribute to the Zn(2+) site.

This sequence belongs to the peptidase M1 family. As to quaternary structure, monomer. Zn(2+) is required as a cofactor.

The protein localises to the cytoplasm. It carries out the reaction Release of an N-terminal amino acid, Xaa-|-Yaa- from a peptide, amide or arylamide. Xaa is preferably Ala, but may be most amino acids including Pro (slow action). When a terminal hydrophobic residue is followed by a prolyl residue, the two may be released as an intact Xaa-Pro dipeptide.. In terms of biological role, aminopeptidase with broad substrate specificity to several peptides. It has more affinity for oligopeptides than for dipeptides. It plays an essential role in the metabolism, it may be involved in nitrogen supply or protein turnover. The chain is Aminopeptidase N (pepN) from Lactococcus lactis subsp. cremoris (Streptococcus cremoris).